The following is a 330-amino-acid chain: Membrane-associated protein VIPP1, chloroplastic (330 aa).

The N-terminal 64 residues, 1 to 64, are a transit peptide targeting the chloroplast; sequence MALKASPVTG…LRLACDNRLR (64 aa). 2 coiled-coil regions span residues 124–259 and 312–329; these read SQKQ…LTQI and KDSE…KAND. A disordered region spans residues 287-312; that stretch reads LSGSSKKGELPPGRSTVAASTRYPFK.

The protein belongs to the PspA/Vipp/IM30 family. Homomultimer. Complex formation involves interaction via the central alpha-helical domain (71-286).

Its subcellular location is the plastid. It is found in the chloroplast inner membrane. It localises to the chloroplast thylakoid membrane. In terms of biological role, required for plastid vesicle formation and thylakoid membrane biogenesis, but not for functional assembly of thylakoid protein complexes. The chain is Membrane-associated protein VIPP1, chloroplastic from Arabidopsis thaliana (Mouse-ear cress).